We begin with the raw amino-acid sequence, 230 residues long: Transmembrane protein 225 (230 aa).

Residues Met1–Ser8 are Cytoplasmic-facing. A helical transmembrane segment spans residues Ile9 to Ile29. At Met30–Arg71 the chain is on the extracellular side. Residues Met72–Ile92 traverse the membrane as a helical segment. Residues Ser93–His99 are Cytoplasmic-facing. A helical transmembrane segment spans residues Leu100–Tyr120. The Extracellular portion of the chain corresponds to His121–Trp139. A helical transmembrane segment spans residues Ile140–Ile160. Over Gln161 to Leu230 the chain is Cytoplasmic. Residues Arg224–Trp228 carry the RVxF motif.

Interacts (via RVxF motif) with PPP1CC. Expressed in testis, epididymis and spermatozoa (at protein level). Not expressed in brain, heart, lung, liver, spleen, kidney and skeletal muscle.

It localises to the cytoplasmic vesicle. The protein resides in the secretory vesicle. It is found in the acrosome membrane. Probably inhibits protein phosphatase 1 (PP1) in sperm via binding to catalytic subunit PPP1CC. The polypeptide is Transmembrane protein 225 (Tmem225) (Mus musculus (Mouse)).